The sequence spans 144 residues: Vasopressin-neurophysin 2-copeptin (144 aa).

Cys1 and Cys6 are joined by a disulfide. Gly9 is modified (glycine amide). 7 disulfide bridges follow: Cys22–Cys66, Cys25–Cys39, Cys33–Cys56, Cys40–Cys46, Cys73–Cys85, Cys79–Cys97, and Cys86–Cys91. N-linked (GlcNAc...) asparagine glycosylation occurs at Asn112.

It belongs to the vasopressin/oxytocin family. Interacts with vasopressin receptors V1bR/AVPR1B (Ki=85 pM), V1aR/AVPR1A (Ki=0.6 nM) and V2R/AVPR2 (Ki=4.9 nM). Interacts with oxytocin receptor (OXTR) (Ki=110 nM).

It localises to the secreted. Neurophysin 2 specifically binds vasopressin. Functionally, vasopressin has a direct antidiuretic action on the kidney, it also causes vasoconstriction of the peripheral vessels. Acts by binding to vasopressin receptors (V1bR/AVPR1B, V1aR/AVPR1A, and V2R/AVPR2). In Cavia porcellus (Guinea pig), this protein is Vasopressin-neurophysin 2-copeptin (AVP).